Reading from the N-terminus, the 309-residue chain is Foldase protein PrsA (309 aa).

Positions 1–20 (MKKKIVAGAVTLLSVAVLAA) are cleaved as a signal peptide. Residue Cys21 is the site of N-palmitoyl cysteine attachment. Cys21 carries the S-diacylglycerol cysteine lipid modification. In terms of domain architecture, PpiC spans 144–241 (TPEVTAQIIK…ASYYIVKLVS (98 aa)).

Belongs to the PrsA family.

The protein localises to the cell membrane. The catalysed reaction is [protein]-peptidylproline (omega=180) = [protein]-peptidylproline (omega=0). In terms of biological role, plays a major role in protein secretion by helping the post-translocational extracellular folding of several secreted proteins. This chain is Foldase protein PrsA, found in Streptococcus gordonii (strain Challis / ATCC 35105 / BCRC 15272 / CH1 / DL1 / V288).